We begin with the raw amino-acid sequence, 379 residues long: Cytochrome b (379 aa).

Transmembrane regions (helical) follow at residues 32-52 (YGSL…VLAT), 76-98 (WLLR…LHIG), 111-131 (VWNI…LGYV), and 177-197 (FFAL…LHIF). Positions 82 and 96 each coordinate heme b. His181 and His195 together coordinate heme b. A ubiquinone is bound at residue His200. The next 4 membrane-spanning stretches (helical) occupy residues 223–243 (YSVK…VFTL), 287–304 (LGGV…FLFS), 320–340 (LARL…WLGS), and 348–367 (NEVA…TMCA).

The protein belongs to the cytochrome b family. In terms of assembly, the main subunits of complex b-c1 are: cytochrome b, cytochrome c1 and the Rieske protein. It depends on heme b as a cofactor.

The protein localises to the mitochondrion inner membrane. Its function is as follows. Component of the ubiquinol-cytochrome c reductase complex (complex III or cytochrome b-c1 complex) that is part of the mitochondrial respiratory chain. The b-c1 complex mediates electron transfer from ubiquinol to cytochrome c. Contributes to the generation of a proton gradient across the mitochondrial membrane that is then used for ATP synthesis. In Brachionus plicatilis (Marine rotifer), this protein is Cytochrome b (mt:Cyt-b).